Here is a 2210-residue protein sequence, read N- to C-terminus: RNA-directed RNA polymerase L (2210 aa).

Residues Lys-26–Ser-285 form an endonuclease region. Mn(2+) is bound by residues Glu-51, Asp-88, and Glu-101. Lys-114 is an active-site residue. Residues Leu-1163–Val-1359 enclose the RdRp catalytic domain. Residue Asp-1319 participates in Mg(2+) binding.

It belongs to the Bunyavirales RNA polymerase family. As to quaternary structure, homomultimer; the oligomeric structure is essential for the polymerase activity. Interacts with nucleoprotein N. Interacts with protein Z; this interaction inhibits viral transcription and replication, Z partially blocks the product exit tunnel for the releasing nascent RNA product. Mn(2+) serves as cofactor. Requires Mg(2+) as cofactor.

It is found in the virion. The protein localises to the host cytoplasm. It catalyses the reaction RNA(n) + a ribonucleoside 5'-triphosphate = RNA(n+1) + diphosphate. In terms of biological role, RNA-dependent RNA polymerase, which is responsible for the replication and transcription of the viral RNA genome using antigenomic RNA as an intermediate. During transcription, synthesizes subgenomic RNAs and assures their capping by a cap-snatching mechanism, which involves the endonuclease activity cleaving the host capped pre-mRNAs. These short capped RNAs are then used as primers for viral transcription. The 3'-end of subgenomic mRNAs molecules are heterogeneous and not polyadenylated. The replicase function is to direct synthesis of antigenomic and genomic RNA which are encapsidated and non capped. As a consequence of the use of the same enzyme for both transcription and replication, these mechanisms need to be well coordinated. These processes may be regulated by proteins N and Z in a dose-dependent manner. Z protein inhibits the viral polymerase L und thus the viral transcription and RNA synthesis. The protein is RNA-directed RNA polymerase L of Sigmodon alstoni (PIRV).